We begin with the raw amino-acid sequence, 649 residues long: tRNA-guanine(15) transglycosylase (649 aa).

Asp-88 serves as the catalytic Nucleophile. Residues Asp-123 and Ala-194 each coordinate substrate. Zn(2+) is bound by residues Cys-280, Cys-282, and Cys-285. In terms of domain architecture, PUA spans 573 to 648 (KYRIVIDSSV…VAATLRGGLK (76 aa)).

This sequence belongs to the archaeosine tRNA-ribosyltransferase family. The cofactor is Zn(2+).

It carries out the reaction guanosine(15) in tRNA + 7-cyano-7-deazaguanine = 7-cyano-7-carbaguanosine(15) in tRNA + guanine. Its pathway is tRNA modification; archaeosine-tRNA biosynthesis. In terms of biological role, exchanges the guanine residue with 7-cyano-7-deazaguanine (preQ0) at position 15 in the dihydrouridine loop (D-loop) of archaeal tRNAs. The protein is tRNA-guanine(15) transglycosylase of Methanococcus maripaludis (strain C6 / ATCC BAA-1332).